The chain runs to 339 residues: GTPase Obg (339 aa).

Residues 1–158 enclose the Obg domain; it reads MKFLDQVDLR…RDLTFELKLM (158 aa). Disordered regions lie at residues 66 to 86 and 125 to 148; these read FAED…GEDK and GNAF…PGEE. The segment covering 72 to 86 has biased composition (basic and acidic residues); sequence PGGRREQTGASGEDK. Over residues 129–138 the composition is skewed to polar residues; the sequence is FKSSTNQAPR. Residues 159-329 enclose the OBG-type G domain; it reads ADVGLVGFPN…LKYTLFDTVH (171 aa). GTP-binding positions include 165–172, 190–194, 212–215, 279–282, and 310–312; these read GFPNAGKS, FTTLT, DIPG, SKID, and SAV. 2 residues coordinate Mg(2+): serine 172 and threonine 192.

The protein belongs to the TRAFAC class OBG-HflX-like GTPase superfamily. OBG GTPase family. In terms of assembly, monomer. Mg(2+) is required as a cofactor.

Its subcellular location is the cytoplasm. In terms of biological role, an essential GTPase which binds GTP, GDP and possibly (p)ppGpp with moderate affinity, with high nucleotide exchange rates and a fairly low GTP hydrolysis rate. Plays a role in control of the cell cycle, stress response, ribosome biogenesis and in those bacteria that undergo differentiation, in morphogenesis control. This is GTPase Obg from Salinibacter ruber (strain DSM 13855 / M31).